The primary structure comprises 525 residues: uncharacterized protein (525 aa).

2 helical membrane passes run 36-56 (AVAAVSLTALPIVPLALTLAL) and 61-81 (ALPAGAALWASASLLAAAAAI). Residues 173–228 (SAVDIRLERTSADGPQFAHIYCEMTPLRDAEGNLLAIVAQSRDVSEEARLQAEAAA) enclose the PAC domain. The 221-residue stretch at 246 to 466 (AVSHELRTPL…VIVVTIPSDA (221 aa)) folds into the Histidine kinase domain. Position 249 is a phosphohistidine; by autocatalysis (His249). Positions 506–525 (LHTGEIGREGGHGAAQAKTA) are disordered.

It is found in the cell membrane. It carries out the reaction ATP + protein L-histidine = ADP + protein N-phospho-L-histidine.. This is an uncharacterized protein from Rhizobium meliloti (strain 1021) (Ensifer meliloti).